We begin with the raw amino-acid sequence, 844 residues long: Patched-related protein 9 (844 aa).

The SSD domain maps to 264–421; sequence LIPWMPWTSL…VTFFNAVMSL (158 aa).

This sequence belongs to the patched family.

The chain is Patched-related protein 9 (ptr-9) from Caenorhabditis elegans.